We begin with the raw amino-acid sequence, 228 residues long: CD302 antigen (228 aa).

Residues 1-20 form the signal peptide; the sequence is MPHAALSSLVLLSLATAIFA. The Extracellular segment spans residues 21-165; sequence DCPSSIWVQF…YDKKYLSDNH (145 aa). The C-type lectin domain occupies 30–149; that stretch reads FQGSCYTFLQ…CEMSSVTGTL (120 aa). Asparagine 107 carries N-linked (GlcNAc...) asparagine glycosylation. Cysteine 125 and cysteine 140 are joined by a disulfide. Residues 166–186 form a helical membrane-spanning segment; the sequence is ILISTLVIASTVTLAVLGAVI. At 187–228 the chain is on the cytoplasmic side; the sequence is WFLYRRSARSGFTSFSPAPQSPYSDGCALVVSEEDEYSVQLD.

Its subcellular location is the membrane. The protein localises to the cell projection. It localises to the filopodium. The protein resides in the cytoplasm. It is found in the cell cortex. Its subcellular location is the microvillus. Functionally, potential multifunctional C-type lectin receptor that may play roles in endocytosis and phagocytosis as well as in cell adhesion and migration. The protein is CD302 antigen (Cd302) of Rattus norvegicus (Rat).